The chain runs to 608 residues: Kelch-like protein 10 (608 aa).

The 68-residue stretch at 39–106 folds into the BTB domain; that stretch reads CDVVIKVNGF…AYTRTVPITP (68 aa). Kelch repeat units follow at residues 292–339, 340–386, 388–433, 434–480, 481–527, and 529–574; these read ILFA…YLKG, YVYI…VLSN, IYAM…TLYG, KVYI…AYGE, HVYA…VVDD, and LFVV…VVPG. At serine 501 the chain carries Phosphoserine.

Self-associates. Interacts with CUL3; indicative for the participation in an E3 ubiquitin ligase complex. Testis specific.

Its subcellular location is the cytoplasm. The protein operates within protein modification; protein ubiquitination. In terms of biological role, may be a substrate-specific adapter of a CUL3-based E3 ubiquitin-protein ligase complex which mediates the ubiquitination and subsequent proteasomal degradation of target proteins during spermatogenesis. Required for male fertility. This is Kelch-like protein 10 (Klhl10) from Mus musculus (Mouse).